A 474-amino-acid chain; its full sequence is MDPDYKSRKEAFVSNLTGGSILEINAVTLVAPASVFLWSVLQSRLSFFTPYGPAALITDFLLNVLAILFATTFYSSAPWLLNLLLVSPAFLILMNSRSRRTQTKAKPPQTATAQHGPGASLPIHPFLTTYRAAMMIITCIAILAVDFRVFPRRFAKAENWGTSLMDLGVGSFVFSGGVVSARSVLKSRERGASPKKTLTQRFTSSVRHSVPLLVLGLVRLYSVKNLDYAEHVTEYGVHWNFFFTLGFLPPFVELFEGIATLIPSYEVLSLAVAVLYQVALESTDLKSYILVSPRGPDLLSKNREGVFSFLGYLAIFLAGRATGMRIIPGGISPSNTPQQARKRVLTRYGANIPVSRRLANMPYVLWVAAFNNAQLFLFCLIETILFPSVHRASGSGKNDEAKRTDFATSPILTAFNRGGLAVFLVANLLTGAVNLTVPTLDVDKTRAMAILVGYAALITGVALGLNKANIKISL.

Asn-15 is a glycosylation site (N-linked (GlcNAc...) asparagine). Helical transmembrane passes span 21–41 (ILEI…WSVL), 54–74 (AALI…TTFY), 75–95 (SSAP…ILMN), 125–145 (PFLT…ILAV), 160–180 (WGTS…GVVS), 304–324 (EGVF…ATGM), 361–381 (MPYV…FCLI), 420–440 (LAVF…VPTL), and 447–467 (AMAI…GLNK).

The protein belongs to the PIGW family.

The protein localises to the endoplasmic reticulum membrane. Its pathway is glycolipid biosynthesis; glycosylphosphatidylinositol-anchor biosynthesis. Probable acetyltransferase, which acetylates the inositol ring of phosphatidylinositol during biosynthesis of GPI-anchor. This is GPI-anchored wall transfer protein 1 (gwt1) from Emericella nidulans (strain FGSC A4 / ATCC 38163 / CBS 112.46 / NRRL 194 / M139) (Aspergillus nidulans).